Here is a 253-residue protein sequence, read N- to C-terminus: Complement C1q subcomponent subunit B (253 aa).

The signal sequence occupies residues 1 to 27; it reads MMMKIPWGSIPVLMLLLLLGLIDISQA. Residue Gln28 is modified to Pyrrolidone carboxylic acid. A 4-hydroxyproline mark is found at Pro35, Pro38, Pro41, Pro53, and Pro56. Collagen-like domains are found at residues 37–86 and 60–114; these read IPGI…PGNP and GEKG…GESG. Positions 38–115 are disordered; it reads PGIPGIPGTP…APGPKGESGD (78 aa). Residues Lys59 and Lys62 each carry the 5-hydroxylysine modification. Pro65 bears the 4-hydroxyproline mark. A compositionally biased stretch (basic and acidic residues) spans 70–79; it reads DHGEFGEKGD. Lys77 carries the 5-hydroxylysine modification. Residues 80–92 show a composition bias toward low complexity; it reads PGIPGNPGKVGPK. Residues Pro83 and Pro86 each carry the 4-hydroxyproline modification. 5-hydroxylysine occurs at positions 92 and 98. Residues 96–105 show a composition bias toward gly residues; it reads GPKGGPGAPG. Pro101, Pro104, and Pro107 each carry 4-hydroxyproline. Lys110 is subject to 5-hydroxylysine. Positions 117–253 constitute a C1q domain; sequence KATQKIAFSA…GFLLFPDMEA (137 aa). Cys181 and Cys198 are oxidised to a cystine. 3 residues coordinate Ca(2+): Asp199, Tyr200, and Gln206.

Core component of the complement C1 complex, a calcium-dependent complex composed of 1 molecule of the C1Q subcomplex, 2 molecules of C1R and 2 molecules of C1S. The C1Q subcomplex is composed 18 subunits: 3 chains of C1QA, C1QB, and C1QC trimerize to form 6 collagen-like triple helices connected to six globular ligand-recognition modules (C1q domain). Hydroxylated on lysine and proline residues. Hydroxylated lysine residues can be glycosylated. Human C1Q contains up to 68.3 hydroxylysine-galactosylglucose residues and up to 2.5 hydroxylysine-galactose per molecule. Total percentage hydroxylysine residues glycosylated is 86.4%.

The protein localises to the secreted. Its subcellular location is the cell surface. The C1Q subcomplex is inhibited by sulfated molecules, such as triterpenoid sulfates, heparan sulfate, or chondroitin sulfates. In terms of biological role, core component of the complement C1 complex, a multiprotein complex that initiates the classical pathway of the complement system, a cascade of proteins that leads to phagocytosis and breakdown of pathogens and signaling that strengthens the adaptive immune system. The classical complement pathway is initiated by the C1Q subcomplex of the C1 complex, which specifically binds IgG or IgM immunoglobulins complexed with antigens, forming antigen-antibody complexes on the surface of pathogens: C1QA, together with C1QB and C1QC, specifically recognizes and binds the Fc regions of IgG or IgM via its C1q domain. Immunoglobulin-binding activates the proenzyme C1R, which cleaves C1S, initiating the proteolytic cascade of the complement system. The C1Q subcomplex is activated by a hexamer of IgG complexed with antigens, while it is activated by a pentameric IgM. The C1Q subcomplex also recognizes and binds phosphatidylserine exposed on the surface of cells undergoing programmed cell death, possibly promoting activation of the complement system. The sequence is that of Complement C1q subcomponent subunit B from Homo sapiens (Human).